Consider the following 316-residue polypeptide: Small ribosomal subunit biogenesis GTPase RsgA (316 aa).

The segment at 1–20 (MSKLSHQQQRRIHNHRQNKL) is disordered. Residues 8-18 (QQRRIHNHRQN) are compositionally biased toward basic residues. The CP-type G domain occupies 92 to 251 (AGKLKPVASN…IIDTPGVRGF (160 aa)). GTP-binding positions include 139-142 (NKSD) and 193-201 (GQSGVGKSS). Cys275, Cys280, His282, and Cys288 together coordinate Zn(2+).

The protein belongs to the TRAFAC class YlqF/YawG GTPase family. RsgA subfamily. In terms of assembly, monomer. Associates with 30S ribosomal subunit, binds 16S rRNA. It depends on Zn(2+) as a cofactor.

It localises to the cytoplasm. In terms of biological role, one of several proteins that assist in the late maturation steps of the functional core of the 30S ribosomal subunit. Helps release RbfA from mature subunits. May play a role in the assembly of ribosomal proteins into the subunit. Circularly permuted GTPase that catalyzes slow GTP hydrolysis, GTPase activity is stimulated by the 30S ribosomal subunit. The polypeptide is Small ribosomal subunit biogenesis GTPase RsgA (Dichelobacter nodosus (strain VCS1703A)).